We begin with the raw amino-acid sequence, 396 residues long: Tryptophan synthase beta chain (396 aa).

At Lys-86 the chain carries N6-(pyridoxal phosphate)lysine.

The protein belongs to the TrpB family. Tetramer of two alpha and two beta chains. The cofactor is pyridoxal 5'-phosphate.

The catalysed reaction is (1S,2R)-1-C-(indol-3-yl)glycerol 3-phosphate + L-serine = D-glyceraldehyde 3-phosphate + L-tryptophan + H2O. It participates in amino-acid biosynthesis; L-tryptophan biosynthesis; L-tryptophan from chorismate: step 5/5. In terms of biological role, the beta subunit is responsible for the synthesis of L-tryptophan from indole and L-serine. The polypeptide is Tryptophan synthase beta chain (Francisella tularensis subsp. holarctica (strain FTNF002-00 / FTA)).